Reading from the N-terminus, the 70-residue chain is Protein SlyX homolog (70 aa).

The protein belongs to the SlyX family.

This Shewanella sp. (strain MR-7) protein is Protein SlyX homolog.